Reading from the N-terminus, the 141-residue chain is Large ribosomal subunit protein bL17 (141 aa).

It belongs to the bacterial ribosomal protein bL17 family. In terms of assembly, part of the 50S ribosomal subunit. Contacts protein L32.

The polypeptide is Large ribosomal subunit protein bL17 (Agrobacterium fabrum (strain C58 / ATCC 33970) (Agrobacterium tumefaciens (strain C58))).